A 450-amino-acid polypeptide reads, in one-letter code: Phosphoglucosamine mutase (450 aa).

Ser101 (phosphoserine intermediate) is an active-site residue. The Mg(2+) site is built by Ser101, Asp242, Asp244, and Asp246. Ser101 carries the phosphoserine modification.

This sequence belongs to the phosphohexose mutase family. The cofactor is Mg(2+). Post-translationally, activated by phosphorylation.

The catalysed reaction is alpha-D-glucosamine 1-phosphate = D-glucosamine 6-phosphate. Functionally, catalyzes the conversion of glucosamine-6-phosphate to glucosamine-1-phosphate. This Rhodopseudomonas palustris (strain BisB5) protein is Phosphoglucosamine mutase.